The primary structure comprises 330 residues: ADP-L-glycero-D-manno-heptose-6-epimerase (330 aa).

NADP(+) is bound by residues 10–11, 31–32, Lys38, Lys53, 74–78, and Asn91; these read FI, DD, and QGACS. Tyr138 acts as the Proton acceptor in catalysis. Lys142 provides a ligand contact to NADP(+). Asn167 lines the substrate pocket. Val168 and Lys176 together coordinate NADP(+). Lys176 acts as the Proton acceptor in catalysis. Substrate is bound by residues Arg178, His185, 199-202, Arg212, and Tyr291; that span reads FAGW.

This sequence belongs to the NAD(P)-dependent epimerase/dehydratase family. HldD subfamily. In terms of assembly, homopentamer. The cofactor is NADP(+).

The catalysed reaction is ADP-D-glycero-beta-D-manno-heptose = ADP-L-glycero-beta-D-manno-heptose. The protein operates within nucleotide-sugar biosynthesis; ADP-L-glycero-beta-D-manno-heptose biosynthesis; ADP-L-glycero-beta-D-manno-heptose from D-glycero-beta-D-manno-heptose 7-phosphate: step 4/4. Functionally, catalyzes the interconversion between ADP-D-glycero-beta-D-manno-heptose and ADP-L-glycero-beta-D-manno-heptose via an epimerization at carbon 6 of the heptose. The protein is ADP-L-glycero-D-manno-heptose-6-epimerase of Bordetella petrii (strain ATCC BAA-461 / DSM 12804 / CCUG 43448).